We begin with the raw amino-acid sequence, 419 residues long: Squamosa promoter-binding-like protein 2 (419 aa).

The interval 77 to 96 (SAEVRTHNFTSETGESLPGE) is disordered. The segment at 166–243 (TPHCQVEGCN…SDHNARRRKP (78 aa)) adopts an SBP-type zinc-finger fold. The Zn(2+) site is built by Cys169, Cys174, Cys191, His194, Cys210, Cys213, His217, and Cys229. The Bipartite nuclear localization signal motif lies at 226-242 (KRSCRRRLSDHNARRRK). The segment at 230 to 249 (RRRLSDHNARRRKPNPGRTY) is disordered.

Zn(2+) serves as cofactor.

The protein resides in the nucleus. Trans-acting factor that binds specifically to the consensus nucleotide sequence 5'-TNCGTACAA-3'. The protein is Squamosa promoter-binding-like protein 2 (SPL2) of Arabidopsis thaliana (Mouse-ear cress).